The sequence spans 473 residues: Cysteine--tRNA ligase (473 aa).

Zn(2+) is bound at residue Cys-29. The 'HIGH' region signature appears at 31–41; the sequence is PTVYDRAHLGN. Residues Cys-225, His-250, and Glu-254 each coordinate Zn(2+). Positions 281–285 match the 'KMSKS' region motif; it reads KMSKS. Position 284 (Lys-284) interacts with ATP.

The protein belongs to the class-I aminoacyl-tRNA synthetase family. Monomer. Requires Zn(2+) as cofactor.

Its subcellular location is the cytoplasm. It carries out the reaction tRNA(Cys) + L-cysteine + ATP = L-cysteinyl-tRNA(Cys) + AMP + diphosphate. The polypeptide is Cysteine--tRNA ligase (Roseobacter denitrificans (strain ATCC 33942 / OCh 114) (Erythrobacter sp. (strain OCh 114))).